Here is a 507-residue protein sequence, read N- to C-terminus: Glutamate--tRNA ligase (507 aa).

The 'HIGH' region motif lies at 14–24 (PSPTGYLHIGG). The 'KMSKS' region signature appears at 261-265 (KLSKR). Lys264 provides a ligand contact to ATP.

The protein belongs to the class-I aminoacyl-tRNA synthetase family. Glutamate--tRNA ligase type 1 subfamily. As to quaternary structure, monomer.

It is found in the cytoplasm. It catalyses the reaction tRNA(Glu) + L-glutamate + ATP = L-glutamyl-tRNA(Glu) + AMP + diphosphate. Catalyzes the attachment of glutamate to tRNA(Glu) in a two-step reaction: glutamate is first activated by ATP to form Glu-AMP and then transferred to the acceptor end of tRNA(Glu). The protein is Glutamate--tRNA ligase of Roseiflexus castenholzii (strain DSM 13941 / HLO8).